A 203-amino-acid polypeptide reads, in one-letter code: Peptidyl-prolyl cis-trans isomerase FKBP11 (203 aa).

A signal peptide spans 1 to 29 (MTLRPSLLPLRLLLLLLLLLRGAVCQAEA). The PPIase FKBP-type domain occupies 59 to 146 (GDTLHIHYSG…HFDVELIALI (88 aa)). A helical membrane pass occupies residues 158–178 (ILPLVGMAMVPALLGLIGYHL).

Belongs to the FKBP-type PPIase family. In terms of assembly, interacts with IFITM5.

It localises to the membrane. The enzyme catalyses [protein]-peptidylproline (omega=180) = [protein]-peptidylproline (omega=0). PPIases accelerate the folding of proteins during protein synthesis. The sequence is that of Peptidyl-prolyl cis-trans isomerase FKBP11 (FKBP11) from Bos taurus (Bovine).